A 170-amino-acid polypeptide reads, in one-letter code: Adenine phosphoribosyltransferase (170 aa).

Belongs to the purine/pyrimidine phosphoribosyltransferase family. As to quaternary structure, homodimer.

It is found in the cytoplasm. It carries out the reaction AMP + diphosphate = 5-phospho-alpha-D-ribose 1-diphosphate + adenine. Its pathway is purine metabolism; AMP biosynthesis via salvage pathway; AMP from adenine: step 1/1. In terms of biological role, catalyzes a salvage reaction resulting in the formation of AMP, that is energically less costly than de novo synthesis. The chain is Adenine phosphoribosyltransferase from Mycoplasma mycoides subsp. mycoides SC (strain CCUG 32753 / NCTC 10114 / PG1).